A 62-amino-acid polypeptide reads, in one-letter code: Large ribosomal subunit protein bL28 (62 aa).

It belongs to the bacterial ribosomal protein bL28 family.

The polypeptide is Large ribosomal subunit protein bL28 (Streptococcus uberis (strain ATCC BAA-854 / 0140J)).